Here is a 349-residue protein sequence, read N- to C-terminus: Cobalt-precorrin-5B C(1)-methyltransferase (349 aa).

Belongs to the CbiD family.

It carries out the reaction Co-precorrin-5B + S-adenosyl-L-methionine = Co-precorrin-6A + S-adenosyl-L-homocysteine. It participates in cofactor biosynthesis; adenosylcobalamin biosynthesis; cob(II)yrinate a,c-diamide from sirohydrochlorin (anaerobic route): step 6/10. In terms of biological role, catalyzes the methylation of C-1 in cobalt-precorrin-5B to form cobalt-precorrin-6A. The chain is Cobalt-precorrin-5B C(1)-methyltransferase from Saccharolobus islandicus (strain Y.N.15.51 / Yellowstone #2) (Sulfolobus islandicus).